The following is a 52-amino-acid chain: LIRRPLFSFLTPTRIFDQSFGEHLSESELFPTSGALSPFLLRSPFLRTPSWL.

The protein belongs to the small heat shock protein (HSP20) family. As to quaternary structure, homodimer. Aggregates with homologous proteins, including alpha-A-crystallin and the small heat shock protein HSPB1, to form large heteromeric complexes.

Functionally, may contribute to the transparency and refractive index of the lens. This chain is Alpha-crystallin B chain (CRYAB), found in Trachemys scripta elegans (Red-eared slider turtle).